A 303-amino-acid polypeptide reads, in one-letter code: HTH-type transcriptional regulator LinR (303 aa).

The HTH lysR-type domain occupies 6–63 (LDFRHLVLLDALLKRHSVSAAARELDLPQPTASHGLARLRKALGDPLLVRARDGMEPT). Residues 23–42 (VSAAARELDLPQPTASHGLA) constitute a DNA-binding region (H-T-H motif).

The protein belongs to the LysR transcriptional regulatory family.

Functionally, positively regulates the transcription of the linD and linE genes that are involved in gamma-hexachlorocyclohexane (gamma-HCH or lindane) degradation. This degradation pathway allows S.japonicum UT26 to grow on gamma-HCH as the sole source of carbon and energy. The protein is HTH-type transcriptional regulator LinR (linR) of Sphingobium indicum (strain DSM 16413 / CCM 7287 / MTCC 6362 / UT26 / NBRC 101211 / UT26S) (Sphingobium japonicum).